The primary structure comprises 579 residues: Glutamine--tRNA ligase (579 aa).

The 'HIGH' region signature appears at 41–51; sequence PEPNGYLHIGH. Residues 42–44 and 48–54 contribute to the ATP site; these read EPN and HIGHAKA. L-glutamine-binding residues include D74 and Y218. Residues T237, 285–286, and 293–295 each bind ATP; these read RL and MSK. A 'KMSKS' region motif is present at residues 292-296; sequence VMSKR.

The protein belongs to the class-I aminoacyl-tRNA synthetase family. As to quaternary structure, monomer.

Its subcellular location is the cytoplasm. The enzyme catalyses tRNA(Gln) + L-glutamine + ATP = L-glutaminyl-tRNA(Gln) + AMP + diphosphate. This Xanthomonas axonopodis pv. citri (strain 306) protein is Glutamine--tRNA ligase.